A 79-amino-acid polypeptide reads, in one-letter code: MTRKNIDLIEMEGVVTQCLSNGMFRVKLENGFLVLAHVSGKIRRNSIRILLGDRVAVELSPYDLHRGRITFRLRPGSKT.

The region spanning 1–74 (MTRKNIDLIE…HRGRITFRLR (74 aa)) is the S1-like domain.

This sequence belongs to the IF-1 family. Component of the 30S ribosomal translation pre-initiation complex which assembles on the 30S ribosome in the order IF-2 and IF-3, IF-1 and N-formylmethionyl-tRNA(fMet); mRNA recruitment can occur at any time during PIC assembly.

The protein resides in the plastid. The protein localises to the chloroplast. One of the essential components for the initiation of protein synthesis. Stabilizes the binding of IF-2 and IF-3 on the 30S subunit to which N-formylmethionyl-tRNA(fMet) subsequently binds. Helps modulate mRNA selection, yielding the 30S pre-initiation complex (PIC). Upon addition of the 50S ribosomal subunit IF-1, IF-2 and IF-3 are released leaving the mature 70S translation initiation complex. In Chlorella vulgaris (Green alga), this protein is Translation initiation factor IF-1, chloroplastic.